The primary structure comprises 373 residues: MNIILVNTLYYPYKIGGAEVSVQILAESLIEKGHSVTVVSIHEHNERKDTEHNGVKIIYLPYSNIYWGLSLTKRNPLSKILWHLIDLYNFKIAKEFENIIMDVKPDIVHTNNLSGISCAVWQKAKKYKCRVIHTSRDYYLIHPNCKLYKNGSEMSVKSIAVSLWSLSKKILGKNVDVYVGISNYIKDKHIEAGFFKSTEKYTIYNSVKSNVILDLTAANDKRLGFIGRLTYEKGFDQFCKLAQLNKTKKFIAAGEFDKNSASLKQLALDSNVELLGYCPVDDFMQKVDIIVLPIKWQEPFGRVVVEAIFAGKVVLTNRVGGITELSRILPNIYFLEDIQDIDSIPFPVEIDDSEKKIFNVDYVTEQYLKIYKG.

This is an uncharacterized protein from Klebsiella pneumoniae.